A 289-amino-acid chain; its full sequence is Probable endonuclease 4 (289 aa).

His74, His115, Glu150, Asp184, His187, His218, Asp231, His233, and Glu263 together coordinate Zn(2+).

It belongs to the AP endonuclease 2 family. Zn(2+) serves as cofactor.

It catalyses the reaction Endonucleolytic cleavage to 5'-phosphooligonucleotide end-products.. Endonuclease IV plays a role in DNA repair. It cleaves phosphodiester bonds at apurinic or apyrimidinic (AP) sites, generating a 3'-hydroxyl group and a 5'-terminal sugar phosphate. The protein is Probable endonuclease 4 of Mycoplasma capricolum subsp. capricolum (strain California kid / ATCC 27343 / NCTC 10154).